The following is an 88-amino-acid chain: Small ribosomal subunit protein bS20 (88 aa).

This sequence belongs to the bacterial ribosomal protein bS20 family.

Its function is as follows. Binds directly to 16S ribosomal RNA. This Renibacterium salmoninarum (strain ATCC 33209 / DSM 20767 / JCM 11484 / NBRC 15589 / NCIMB 2235) protein is Small ribosomal subunit protein bS20.